Reading from the N-terminus, the 242-residue chain is Caffeoyl-CoA O-methyltransferase 4 (242 aa).

Residue Lys-16 coordinates substrate. S-adenosyl-L-methionine-binding positions include Thr-58, Glu-80, Gly-82–Val-83, Ser-88, Asp-106, and Ala-135. Asp-158 provides a ligand contact to substrate. Residue Asp-158 coordinates a divalent metal cation. Residue Asp-160 participates in S-adenosyl-L-methionine binding. A divalent metal cation is bound by residues Asp-184 and Asn-185. Asn-189 provides a ligand contact to substrate.

This sequence belongs to the class I-like SAM-binding methyltransferase superfamily. Cation-dependent O-methyltransferase family. CCoAMT subfamily. Mg(2+) is required as a cofactor. As to expression, mostly expressed in the bottom and middle parts of the stems.

It catalyses the reaction (E)-caffeoyl-CoA + S-adenosyl-L-methionine = (E)-feruloyl-CoA + S-adenosyl-L-homocysteine + H(+). It functions in the pathway aromatic compound metabolism; phenylpropanoid biosynthesis. Its function is as follows. Methylates caffeoyl-CoA to feruloyl-CoA and 5-hydroxyferuloyl-CoA to sinapoyl-CoA. Plays a role in the synthesis of feruloylated polysaccharides. Involved in the reinforcement of the plant cell wall. Also involved in the responding to wounding or pathogen challenge by the increased formation of cell wall-bound ferulic acid polymers. This Nicotiana tabacum (Common tobacco) protein is Caffeoyl-CoA O-methyltransferase 4 (CCOAOMT4).